Consider the following 419-residue polypeptide: Odorant receptor 56a (419 aa).

Over 1–41 (MFKVKDLLLSPTTFEDPIFGTHLRYFQWYGYVASKDQNRPL) the chain is Cytoplasmic. Residues 42-62 (LSLIRCTILTASIWLSCALML) form a helical membrane-spanning segment. Topologically, residues 63–76 (ARVFRGYENLNDGA) are extracellular. A helical transmembrane segment spans residues 77-97 (TSYATAVQYFAVSIAMFNAYV). The Cytoplasmic segment spans residues 98 to 137 (QRDKVISLLRVAHSDIQNLMHEADNREMELLVATQAYTRT). A helical transmembrane segment spans residues 138-158 (ITLLIWIPSVIAGLMAYSDCI). Residues 159–196 (YRSLFLPKSVFNVPAVRRGEEHPILLFQLFPFGELCDN) are Extracellular-facing. Residues 197-217 (FVVGYLGPWYALGLGITAIPL) traverse the membrane as a helical segment. At 218–292 (WHTFITCLMK…FVQELQYLIC (75 aa)) the chain is on the cytoplasmic side. A helical membrane pass occupies residues 293 to 313 (VPVMADFIIFSVLICFLFFAL). The Extracellular portion of the chain corresponds to 314-323 (TVGVPSKMDY). Residues 324 to 344 (FFMFIYLFVMAGILWIYHWHA) form a helical membrane-spanning segment. Residues 345-389 (TLIVECHDELSLAYFSCGWYNFEMPLQKMLVFMMMHAQRPMKMRA) are Cytoplasmic-facing. The helical transmembrane segment at 390-410 (LLVDLNLRTFIDIGRGAYSYF) threads the bilayer. Topologically, residues 411-419 (NLLRSSHLY) are extracellular.

It belongs to the insect chemoreceptor superfamily. Heteromeric odorant receptor channel (TC 1.A.69) family. Or30a subfamily. In terms of assembly, interacts with Orco. Complexes exist early in the endomembrane system in olfactory sensory neurons (OSNs), coupling these complexes to the conserved ciliary trafficking pathway. As to expression, expressed in olfactory sensory neurons in the antenna.

The protein localises to the cell membrane. Functionally, odorant receptor which mediates acceptance or avoidance behavior, depending on its substrates. The odorant receptor repertoire encodes a large collection of odor stimuli that vary widely in identity, intensity, and duration. May form a complex with Orco to form odorant-sensing units, providing sensitive and prolonged odorant signaling and calcium permeability. Specific receptor for geosmin, a microbial odorant that constitutes an ecologically relevant stimulus that alerts flies to the presence of harmful microbes and induces avoidance behavior. This is Odorant receptor 56a (Or56a) from Drosophila melanogaster (Fruit fly).